We begin with the raw amino-acid sequence, 416 residues long: MSSAADFDPKPRRASIAVDVGGVIVGGGAPIVVQSMTNTDTADIDSTVAQVAALHRAGSELVRITVDRDESAAAVPKIRERLLRLGMDVPLIGDFHYIGHKLLADHPDCAAALAKYRINPGNVGFKDKKDKQFAEIIEMAIRYDKPVRIGVNWGSLDQDLLTALMDQNAAAGSPLSARQVTREAIVQSALLSAALAEEIGLPRNRIILSAKVSQVQDLIAVNSMLAERSNHALHLGLTEAGMGSKGIVASAAAMGFVLQHGIGDTIRVSLTPEPNGDRTREVQVAQEILQVMGFRQFVPVVAACPGCGRTTSTVFQELAQNIQNDIRKNMPVWREKYPGVEALNVAVMGCIVNGPGESKHADIGISLPGTGETPAAPVFIDGKKALTLRGPNIAADFEALVVDYIEKRFGQRTAAE.

[4Fe-4S] cluster is bound by residues Cys304, Cys307, Cys350, and Glu357.

Belongs to the IspG family. [4Fe-4S] cluster serves as cofactor.

The catalysed reaction is (2E)-4-hydroxy-3-methylbut-2-enyl diphosphate + oxidized [flavodoxin] + H2O + 2 H(+) = 2-C-methyl-D-erythritol 2,4-cyclic diphosphate + reduced [flavodoxin]. It functions in the pathway isoprenoid biosynthesis; isopentenyl diphosphate biosynthesis via DXP pathway; isopentenyl diphosphate from 1-deoxy-D-xylulose 5-phosphate: step 5/6. Its function is as follows. Converts 2C-methyl-D-erythritol 2,4-cyclodiphosphate (ME-2,4cPP) into 1-hydroxy-2-methyl-2-(E)-butenyl 4-diphosphate. The chain is 4-hydroxy-3-methylbut-2-en-1-yl diphosphate synthase (flavodoxin) from Rhizobium etli (strain CIAT 652).